Consider the following 377-residue polypeptide: tRNA-specific 2-thiouridylase MnmA (377 aa).

Residues 22–29 (GMSGGVDS) and Met48 contribute to the ATP site. Residues 108–110 (NPD) are interaction with target base in tRNA. The active-site Nucleophile is the Cys113. Cysteines 113 and 210 form a disulfide. ATP is bound at residue Gly138. Positions 160–162 (KDQ) are interaction with tRNA. The active-site Cysteine persulfide intermediate is the Cys210. The tract at residues 322-323 (RY) is interaction with tRNA.

The protein belongs to the MnmA/TRMU family.

The protein resides in the cytoplasm. It catalyses the reaction S-sulfanyl-L-cysteinyl-[protein] + uridine(34) in tRNA + AH2 + ATP = 2-thiouridine(34) in tRNA + L-cysteinyl-[protein] + A + AMP + diphosphate + H(+). Its function is as follows. Catalyzes the 2-thiolation of uridine at the wobble position (U34) of tRNA, leading to the formation of s(2)U34. In Shewanella amazonensis (strain ATCC BAA-1098 / SB2B), this protein is tRNA-specific 2-thiouridylase MnmA.